Here is a 227-residue protein sequence, read N- to C-terminus: PKHD-type hydroxylase GDI1238/Gdia_1949 (227 aa).

In terms of domain architecture, Fe2OG dioxygenase spans 78-178 (RVVPPLFNRY…RLASFFWTQS (101 aa)). 3 residues coordinate Fe cation: H96, D98, and H159. R169 provides a ligand contact to 2-oxoglutarate.

Fe(2+) serves as cofactor. The cofactor is L-ascorbate.

This Gluconacetobacter diazotrophicus (strain ATCC 49037 / DSM 5601 / CCUG 37298 / CIP 103539 / LMG 7603 / PAl5) protein is PKHD-type hydroxylase GDI1238/Gdia_1949.